The primary structure comprises 84 residues: Small ribosomal subunit protein bS18B (84 aa).

The segment covering 1–10 has biased composition (basic residues); the sequence is MAVKRAPSKK. Residues 1–20 form a disordered region; the sequence is MAVKRAPSKKVRAEQARRPK.

The protein belongs to the bacterial ribosomal protein bS18 family. As to quaternary structure, part of the 30S ribosomal subunit. Forms a tight heterodimer with protein bS6.

In terms of biological role, binds as a heterodimer with protein bS6 to the central domain of the 16S rRNA, where it helps stabilize the platform of the 30S subunit. The sequence is that of Small ribosomal subunit protein bS18B from Nocardia farcinica (strain IFM 10152).